A 117-amino-acid polypeptide reads, in one-letter code: Large ribosomal subunit protein bL19 (117 aa).

Belongs to the bacterial ribosomal protein bL19 family.

Its function is as follows. This protein is located at the 30S-50S ribosomal subunit interface and may play a role in the structure and function of the aminoacyl-tRNA binding site. This chain is Large ribosomal subunit protein bL19, found in Alkaliphilus metalliredigens (strain QYMF).